A 437-amino-acid polypeptide reads, in one-letter code: Serine hydroxymethyltransferase 2 (437 aa).

Residues Leu-125 and 129-131 (GHL) contribute to the (6S)-5,6,7,8-tetrahydrofolate site. Lys-234 bears the N6-(pyridoxal phosphate)lysine mark.

It belongs to the SHMT family. As to quaternary structure, homodimer. The cofactor is pyridoxal 5'-phosphate.

The protein localises to the cytoplasm. It carries out the reaction (6R)-5,10-methylene-5,6,7,8-tetrahydrofolate + glycine + H2O = (6S)-5,6,7,8-tetrahydrofolate + L-serine. It participates in one-carbon metabolism; tetrahydrofolate interconversion. It functions in the pathway amino-acid biosynthesis; glycine biosynthesis; glycine from L-serine: step 1/1. Functionally, catalyzes the reversible interconversion of serine and glycine with tetrahydrofolate (THF) serving as the one-carbon carrier. This reaction serves as the major source of one-carbon groups required for the biosynthesis of purines, thymidylate, methionine, and other important biomolecules. Also exhibits THF-independent aldolase activity toward beta-hydroxyamino acids, producing glycine and aldehydes, via a retro-aldol mechanism. This chain is Serine hydroxymethyltransferase 2, found in Mesorhizobium japonicum (strain LMG 29417 / CECT 9101 / MAFF 303099) (Mesorhizobium loti (strain MAFF 303099)).